Consider the following 976-residue polypeptide: MKLKSVFRSVLKYRKTNLSLLLLITYSIITLLYIFDHERYKLNLPKEDEHPEFNDLLETAWGDLQIITASFHPYTSKENDKVHDYLLKRVLEITGNSSFASVSDDKESERSILFQQQDPFNESSRFSRVTYFESSNILVKLEGKNPEEEGLLLSAHFDSVPTGYGATDDGMGVVSLLANLKYHIKHRPNRTLIFNFNNNEEFGLLGASTYFNHSWSNLTKYVINLEGTGAGGKAVLFRTSDTSTAKIYQQSVKENPFGNSIYQQGFYSRYVRSETDYKIYEENGMRGWDVAFYKPRNLYHTIKDSIQYTSKASLWHMLHTSLQLSAYVASNSLDTADQTPACYFDFIGLKFFVISAKTLFYWNCIFLLVSPVVAIGLYLISRDRMTWKSHSWLSWTRFPLSLAAGIIVQKLFSNDIIRSNPLTFSRNYFWPISAFFTQVIFTSYVLINCSNFFFPCADMKSLSIIELFIILWTILLFTSKLLYSSDYRYTGLYPLSIFFLLSTIAAILRLLALALGMRTRKRLGRECRDHHSNYSSHSQIDMERDGQENLEQPQDQFTSSQDDQASIQDDNVSTTSAGPSHNVDEDHGMDSSSQQHDERVPLLKGSNSMEEGLSTRENSLKLEYTDYAWIIQFLLIVPIPSFILFNSVDVIMDALNHTVQEGSKATFDVLRFGMVGSILMALPILPFFYKVNYITISLTALLFLISASKTLLVHPFTNSNPLKVRFSQNIDLSQGNAASVHVLGREGNFLKPMLQDLPSIKYSSTHINCTSVTNGMELCMYDGMQPNLLSTNGNTNISSMVKVHVLHNNRNSTERSPYEPIVAELLLEVKENRACTLTFESRHQAKSPVREITVYQKKNSAPQKTNITKTIKSASGINELQLHKLDFDQETYHIGVQWFPKLLTDGNLEDDKLGTKDELSVSISCYWGEYDSESVVNGTAVRKIPAFDELINYAPLSFSFTNEQKGLVIVKDAIIL.

Residues 1-15 are Cytoplasmic-facing; the sequence is MKLKSVFRSVLKYRK. A helical membrane pass occupies residues 16–36; it reads TNLSLLLLITYSIITLLYIFD. Over 37 to 359 the chain is Vacuolar; that stretch reads HERYKLNLPK…KFFVISAKTL (323 aa). Asn-96 and Asn-121 each carry an N-linked (GlcNAc...) asparagine glycan. Zn(2+)-binding residues include His-156 and Asp-168. Asn-189 carries N-linked (GlcNAc...) asparagine glycosylation. Glu-200 serves as the catalytic Proton acceptor. Glu-201 is a binding site for Zn(2+). Residues Asn-212 and Asn-217 are each glycosylated (N-linked (GlcNAc...) asparagine). Glu-226 and His-300 together coordinate Zn(2+). The helical transmembrane segment at 360–380 threads the bilayer; sequence FYWNCIFLLVSPVVAIGLYLI. The Cytoplasmic portion of the chain corresponds to 381–392; the sequence is SRDRMTWKSHSW. A helical transmembrane segment spans residues 393 to 412; the sequence is LSWTRFPLSLAAGIIVQKLF. At 413–428 the chain is on the vacuolar side; that stretch reads SNDIIRSNPLTFSRNY. Residues 429–449 traverse the membrane as a helical segment; that stretch reads FWPISAFFTQVIFTSYVLINC. The Cytoplasmic portion of the chain corresponds to 450 to 461; that stretch reads SNFFFPCADMKS. Residues 462–482 traverse the membrane as a helical segment; the sequence is LSIIELFIILWTILLFTSKLL. Residues 483–496 lie on the Vacuolar side of the membrane; sequence YSSDYRYTGLYPLS. A helical membrane pass occupies residues 497 to 517; that stretch reads IFFLLSTIAAILRLLALALGM. The Cytoplasmic segment spans residues 518-627; the sequence is RTRKRLGREC…NSLKLEYTDY (110 aa). The segment at 528 to 610 is disordered; sequence RDHHSNYSSH…PLLKGSNSME (83 aa). The segment covering 549 to 558 has biased composition (polar residues); it reads NLEQPQDQFT. A compositionally biased stretch (low complexity) spans 559 to 570; sequence SSQDDQASIQDD. Over residues 582–601 the composition is skewed to basic and acidic residues; it reads NVDEDHGMDSSSQQHDERVP. A helical membrane pass occupies residues 628-648; it reads AWIIQFLLIVPIPSFILFNSV. Over 649-668 the chain is Vacuolar; that stretch reads DVIMDALNHTVQEGSKATFD. The N-linked (GlcNAc...) asparagine glycan is linked to Asn-656. A helical membrane pass occupies residues 669 to 689; that stretch reads VLRFGMVGSILMALPILPFFY. The Cytoplasmic segment spans residues 690 to 692; the sequence is KVN. Residues 693–713 form a helical membrane-spanning segment; sequence YITISLTALLFLISASKTLLV. Over 714–976 the chain is Vacuolar; that stretch reads HPFTNSNPLK…LVIVKDAIIL (263 aa). N-linked (GlcNAc...) asparagine glycosylation is found at Asn-768, Asn-796, Asn-811, Asn-866, and Asn-937.

Belongs to the peptidase M28 family. Zn(2+) serves as cofactor.

It localises to the vacuole membrane. May be involved in vacuolar sorting and osmoregulation. In Saccharomyces cerevisiae (strain Lalvin EC1118 / Prise de mousse) (Baker's yeast), this protein is Vacuolar membrane protease.